Consider the following 118-residue polypeptide: NADPH-dependent 7-cyano-7-deazaguanine reductase (118 aa).

Cys31 functions as the Thioimide intermediate in the catalytic mechanism. The active-site Proton donor is Asp38. Residues 53-55 and 72-73 contribute to the substrate site; these read VEL and YE.

The protein belongs to the GTP cyclohydrolase I family. QueF type 1 subfamily.

It localises to the cytoplasm. It catalyses the reaction 7-aminomethyl-7-carbaguanine + 2 NADP(+) = 7-cyano-7-deazaguanine + 2 NADPH + 3 H(+). It functions in the pathway tRNA modification; tRNA-queuosine biosynthesis. Its function is as follows. Catalyzes the NADPH-dependent reduction of 7-cyano-7-deazaguanine (preQ0) to 7-aminomethyl-7-deazaguanine (preQ1). This chain is NADPH-dependent 7-cyano-7-deazaguanine reductase, found in Chlorobium phaeobacteroides (strain BS1).